We begin with the raw amino-acid sequence, 637 residues long: Chaperone protein DnaK (637 aa).

The residue at position 198 (T198) is a Phosphothreonine; by autocatalysis. The segment covering 601–615 (AQQKAQAEQAGADAG) has biased composition (low complexity). The tract at residues 601–637 (AQQKAQAEQAGADAGEQPKQDDDVVDAEFEEVKEDKK) is disordered. Acidic residues predominate over residues 623 to 637 (DVVDAEFEEVKEDKK).

It belongs to the heat shock protein 70 family.

In terms of biological role, acts as a chaperone. In Vibrio atlanticus (strain LGP32) (Vibrio splendidus (strain Mel32)), this protein is Chaperone protein DnaK.